The following is a 142-amino-acid chain: Baculoviral IAP repeat-containing protein 5 (142 aa).

Residues 18–88 form a BIR repeat; that stretch reads RISTFKNWPF…KHSSGCAFLS (71 aa). Serine 20 bears the Phosphoserine; by AURKC mark. Position 23 is an N6-acetyllysine (lysine 23). Position 34 is a phosphothreonine; by CDK1 and CDK15 (threonine 34). The residue at position 48 (threonine 48) is a Phosphothreonine. Cysteine 57, cysteine 60, histidine 77, and cysteine 84 together coordinate Zn(2+). N6-acetyllysine is present on residues lysine 90, lysine 110, lysine 112, and lysine 115. Threonine 117 carries the phosphothreonine; by AURKB modification. An N6-acetyllysine modification is found at lysine 129.

Belongs to the IAP family. In terms of assembly, monomer or homodimer. Exists as a homodimer in the apo state and as a monomer in the CPC-bound state. The monomer protects cells against apoptosis more efficiently than the dimer. Only the dimeric form is capable of enhancing tubulin stability in cells. When phosphorylated, interacts with LAMTOR5/HBXIP; the resulting complex binds pro-CASP9, as well as active CASP9, but much less efficiently. Component of the chromosomal passenger complex (CPC) composed of at least BIRC5/survivin, CDCA8/borealin, INCENP, AURKB or AURKC; in the complex forms a triple-helix bundle-based subcomplex with INCENP and CDCA8. Interacts with JTB. Interacts (via BIR domain) with histone H3 phosphorylated at 'Thr-3' (H3pT3). Interacts with EVI5. Interacts with GTP-bound RAN in both the S and M phases of the cell cycle. Interacts with USP9X. Interacts with tubulin. Interacts with BIRC2/c-IAP1. The acetylated form at Lys-129 interacts with STAT3. The monomeric form deacetylated at Lys-129 interacts with XPO1/CRM1. The monomeric form interacts with XIAP/BIRC4. Both the dimeric and monomeric form can interact with DIABLO/SMAC. Interacts with BIRC6/bruce. Interacts with FBXL7; this interaction facilitates the polyubiquitination and subsequent proteasomal degradation of BIRC5 by the SCF(FBXL7) E3 ubiquitin-protein ligase complex. Post-translationally, ubiquitinated by the Cul9-RING ubiquitin-protein ligase complex, leading to its degradation. Ubiquitination is required for centrosomal targeting. Deubiquitinated by USP35 or USP38; leading to stabilization. In terms of processing, acetylation at Lys-129 results in its homodimerization, while deacetylation promotes the formation of monomers which heterodimerize with XPO1/CRM1 which facilitates its nuclear export. The acetylated form represses STAT3 transactivation. The dynamic equilibrium between its acetylation and deacetylation at Lys-129 determines its interaction with XPO1/CRM1, its subsequent subcellular localization, and its ability to inhibit STAT3 transactivation. In vitro phosphorylation at Thr-117 by AURKB prevents interaction with INCENP and localization to mitotic chromosomes. Phosphorylation at Thr-48 by CK2 is critical for its mitotic and anti-apoptotic activities. Phosphorylation at Thr-34 by CDK15 is critical for its anti-apoptotic activity. Phosphorylation at Ser-20 by AURKC is critical for regulation of proper chromosome alignment and segregation, and possibly cytokinesis.

It localises to the cytoplasm. Its subcellular location is the nucleus. It is found in the chromosome. The protein resides in the centromere. The protein localises to the cytoskeleton. It localises to the spindle. Its subcellular location is the kinetochore. It is found in the midbody. In terms of biological role, multitasking protein that has dual roles in promoting cell proliferation and preventing apoptosis. Component of a chromosome passage protein complex (CPC) which is essential for chromosome alignment and segregation during mitosis and cytokinesis. Acts as an important regulator of the localization of this complex; directs CPC movement to different locations from the inner centromere during prometaphase to midbody during cytokinesis and participates in the organization of the center spindle by associating with polymerized microtubules. Involved in the recruitment of CPC to centromeres during early mitosis via association with histone H3 phosphorylated at 'Thr-3' (H3pT3) during mitosis. The complex with RAN plays a role in mitotic spindle formation by serving as a physical scaffold to help deliver the RAN effector molecule TPX2 to microtubules. May counteract a default induction of apoptosis in G2/M phase. The acetylated form represses STAT3 transactivation of target gene promoters. May play a role in neoplasia. Inhibitor of CASP3 and CASP7. Essential for the maintenance of mitochondrial integrity and function. The protein is Baculoviral IAP repeat-containing protein 5 (BIRC5) of Sus scrofa (Pig).